The primary structure comprises 423 residues: Levansucrase (423 aa).

Trp-47, Asp-48, Ser-119, Arg-193, and Asp-194 together coordinate sucrose. Asp-48 functions as the Nucleophile in the catalytic mechanism. Residue Glu-278 is the Proton donor/acceptor of the active site.

It belongs to the glycosyl hydrolase 68 family.

Its subcellular location is the secreted. It carries out the reaction [6)-beta-D-fructofuranosyl-(2-&gt;](n) alpha-D-glucopyranoside + sucrose = [6)-beta-D-fructofuranosyl-(2-&gt;](n+1) alpha-D-glucopyranoside + D-glucose. In terms of biological role, catalyzes the synthesis of levan, a fructose polymer, by transferring the fructosyl moiety from sucrose to a growing acceptor molecule. The sequence is that of Levansucrase from Zymomonas mobilis subsp. mobilis (strain ATCC 10988 / DSM 424 / LMG 404 / NCIMB 8938 / NRRL B-806 / ZM1).